The primary structure comprises 141 residues: Mitochondrial import inner membrane translocase subunit tim16 (141 aa).

Positions glutamate 59–lysine 117 are J-like. A disordered region spans residues lysine 119–arginine 141.

It belongs to the TIM16/PAM16 family. In terms of assembly, heterodimer with tim14/pam18. Component of the PAM complex, at least composed of hsp70-5/ssc1, grpe/mge1, tim44, un-4/pam16, pam17 and tim14/pam18.

The protein resides in the mitochondrion inner membrane. Its function is as follows. Essential component of the PAM complex, a complex required for the translocation of transit peptide-containing proteins from the inner membrane into the mitochondrial matrix in an ATP-dependent manner. In the complex, it is required to regulate activity of mtHSP70 (hsp70-5) via its interaction with tim14/pam18. May act by positioning tim14/pam18 in juxtaposition to mtHSP70 at the translocon to maximize ATPase stimulation. The polypeptide is Mitochondrial import inner membrane translocase subunit tim16 (un-4) (Neurospora crassa (strain ATCC 24698 / 74-OR23-1A / CBS 708.71 / DSM 1257 / FGSC 987)).